We begin with the raw amino-acid sequence, 303 residues long: Signal recognition particle receptor FtsY (303 aa).

GTP is bound by residues 108–115 (GVNGAGKT), 190–194 (DTAGR), and 254–257 (TKLD).

The protein belongs to the GTP-binding SRP family. FtsY subfamily. In terms of assembly, part of the signal recognition particle protein translocation system, which is composed of SRP and FtsY. SRP is a ribonucleoprotein composed of Ffh and a 4.5S RNA molecule.

It is found in the cell inner membrane. The protein resides in the cytoplasm. The catalysed reaction is GTP + H2O = GDP + phosphate + H(+). Involved in targeting and insertion of nascent membrane proteins into the cytoplasmic membrane. Acts as a receptor for the complex formed by the signal recognition particle (SRP) and the ribosome-nascent chain (RNC). Interaction with SRP-RNC leads to the transfer of the RNC complex to the Sec translocase for insertion into the membrane, the hydrolysis of GTP by both Ffh and FtsY, and the dissociation of the SRP-FtsY complex into the individual components. The chain is Signal recognition particle receptor FtsY from Rickettsia conorii (strain ATCC VR-613 / Malish 7).